A 298-amino-acid chain; its full sequence is Glycine--tRNA ligase alpha subunit (298 aa).

It belongs to the class-II aminoacyl-tRNA synthetase family. Tetramer of two alpha and two beta subunits.

It is found in the cytoplasm. The catalysed reaction is tRNA(Gly) + glycine + ATP = glycyl-tRNA(Gly) + AMP + diphosphate. This is Glycine--tRNA ligase alpha subunit from Helicobacter acinonychis (strain Sheeba).